The sequence spans 550 residues: Arginine--tRNA ligase (550 aa).

The 'HIGH' region signature appears at 130-140; sequence ANPTGPIHIGG.

Belongs to the class-I aminoacyl-tRNA synthetase family. Monomer.

It is found in the cytoplasm. It catalyses the reaction tRNA(Arg) + L-arginine + ATP = L-arginyl-tRNA(Arg) + AMP + diphosphate. In Mycolicibacterium gilvum (strain PYR-GCK) (Mycobacterium gilvum (strain PYR-GCK)), this protein is Arginine--tRNA ligase.